The primary structure comprises 134 residues: Thionin-2.2 (134 aa).

The signal sequence occupies residues 1–24 (MEGKTVISSLLIMSLVLAQIQVEA). Cystine bridges form between cysteine 27/cysteine 64, cysteine 28/cysteine 56, and cysteine 40/cysteine 50. The propeptide at 71–134 (DILENSGDAV…GGSTAAVKSA (64 aa)) is acidic domain.

It belongs to the plant thionin (TC 1.C.44) family. In terms of tissue distribution, low basal expression in seedlings. Also detected in rosette leaves.

Its subcellular location is the secreted. In terms of biological role, thionins are small plant proteins which are toxic to animal cells. They seem to exert their toxic effect at the level of the cell membrane. Their precise function is not known. The protein is Thionin-2.2 (THI2.2) of Arabidopsis thaliana (Mouse-ear cress).